The sequence spans 93 residues: MHQSLLCFGARRLPMTTKLGHQYYKGTRTGKMGQKTRHGGFLVQWSRVRTFVPPSGDCELLPFVSRRIQATKGTYPEGANGLDGAVYFDLAHS.

Residues 1–13 (MHQSLLCFGARRL) constitute a mitochondrion transit peptide.

This sequence belongs to the mitochondrion-specific ribosomal protein mL41 family. As to quaternary structure, component of the mitochondrial large ribosomal subunit (mt-LSU). Mature yeast 74S mitochondrial ribosomes consist of a small (37S) and a large (54S) subunit. The 37S small subunit contains a 15S ribosomal RNA (15S mt-rRNA) and at least 32 different proteins. The 54S large subunit contains a 21S rRNA (21S mt-rRNA) and at least 45 different proteins.

Its subcellular location is the mitochondrion. Its function is as follows. Component of the mitochondrial ribosome (mitoribosome), a dedicated translation machinery responsible for the synthesis of mitochondrial genome-encoded proteins, including at least some of the essential transmembrane subunits of the mitochondrial respiratory chain. The mitoribosomes are attached to the mitochondrial inner membrane and translation products are cotranslationally integrated into the membrane. This chain is Large ribosomal subunit protein mL41 (mrpl27), found in Schizosaccharomyces pombe (strain 972 / ATCC 24843) (Fission yeast).